We begin with the raw amino-acid sequence, 1223 residues long: WD repeat-containing protein 11 (1223 aa).

2 WD repeats span residues 59–108 (KHKA…AQCE) and 111–154 (EHVK…KLWK). Ser205 and Ser209 each carry phosphoserine. A WD 3 repeat occupies 354–393 (KTVRPFSMVCCPVNENAAALIVSDGRVMIWELKSAVCSRN). A phosphoserine mark is found at Ser401 and Ser405. WD repeat units lie at residues 470-509 (RMCPPLTTKNIKTYQPLLAVGTSNGSVLVYHLTSGLLHKE), 565-604 (NDESPIEMIKVSHLKQYLAVVFKDKPLELWDIRTCTLLRE), 707-744 (GSMGSITCIAWKGDTLVLGDMDGNLNFWDLKARVSRGI), 746-786 (THRS…MVSS), 792-830 (NVTFRILDVDWCTSDKVILASDDGCIRVLEMSMKSTCFR), and 892-939 (ALSN…HSLS).

As to quaternary structure, component of the complex WDR11 composed of C17orf75, FAM91A1 and WDR11; FAM91A1 and WDR11 are required for proper location of the complex. Interacts with GLI3; the interaction associateS EMX1 with GLI3. Interacts with TBC1D23; this interaction may be indirect and recruits TBC1D23 to AP-1-derived vesicles. Interacts (via the N-terminal and the central portion of the protein) with EMX1. As to expression, broadly expressed in various organs including brain, eye,ear, lung, heart, kideny and gonads. Cerebral cortex. The entire developing central nervous system, except for the spinal cord, reveals expression. Expressed in the neuroepithelium, including the diencephalic region that gives rise to hypothalamic neurons. In the adult brain, intense expression is restricted to the olfactory bulb, the olfaction-related piriform cortex, the granule cell layer of the cerebellum, and neurons of the hippocampal formation. The brain demonstrated expression scattered throughout the hypothalamus, sometimes in clusters of neurons.

The protein localises to the cytoplasm. The protein resides in the cytoskeleton. It is found in the cilium basal body. Its subcellular location is the nucleus. It localises to the cilium axoneme. The protein localises to the cytoplasmic vesicle. The protein resides in the golgi apparatus. It is found in the trans-Golgi network. Functionally, involved in the Hedgehog (Hh) signaling pathway, is essential for normal ciliogenesis. Regulates the proteolytic processing of GLI3 and cooperates with the transcription factor EMX1 in the induction of downstream Hh pathway gene expression and gonadotropin-releasing hormone production. WDR11 complex facilitates the tethering of Adaptor protein-1 complex (AP-1)-derived vesicles. WDR11 complex acts together with TBC1D23 to facilitate the golgin-mediated capture of vesicles generated using AP-1. This chain is WD repeat-containing protein 11 (Wdr11), found in Mus musculus (Mouse).